The following is a 741-amino-acid chain: Cysteine--tRNA ligase, cytoplasmic (741 aa).

Cys-46 contacts Zn(2+). The 'HIGH' region motif lies at 48-58 (PTVYDASHMGH). Ser-297 bears the Phosphoserine mark. Positions 340, 365, and 369 each coordinate Zn(2+). The short motif at 398-402 (KMSKS) is the 'KMSKS' region element. Position 401 (Lys-401) interacts with ATP. Positions 697–718 (FDENGLPTHDKEGKEVSKGQIK) are disordered. Over residues 704-713 (THDKEGKEVS) the composition is skewed to basic and acidic residues.

This sequence belongs to the class-I aminoacyl-tRNA synthetase family. It depends on Zn(2+) as a cofactor.

The protein resides in the cytoplasm. It carries out the reaction tRNA(Cys) + L-cysteine + ATP = L-cysteinyl-tRNA(Cys) + AMP + diphosphate. The chain is Cysteine--tRNA ligase, cytoplasmic from Drosophila melanogaster (Fruit fly).